Consider the following 444-residue polypeptide: Phosphoglucosamine mutase (444 aa).

The active-site Phosphoserine intermediate is the S103. Mg(2+) contacts are provided by S103, D241, D243, and D245. S103 bears the Phosphoserine mark.

Belongs to the phosphohexose mutase family. It depends on Mg(2+) as a cofactor. Post-translationally, activated by phosphorylation.

The enzyme catalyses alpha-D-glucosamine 1-phosphate = D-glucosamine 6-phosphate. Its function is as follows. Catalyzes the conversion of glucosamine-6-phosphate to glucosamine-1-phosphate. This chain is Phosphoglucosamine mutase, found in Deinococcus radiodurans (strain ATCC 13939 / DSM 20539 / JCM 16871 / CCUG 27074 / LMG 4051 / NBRC 15346 / NCIMB 9279 / VKM B-1422 / R1).